The chain runs to 505 residues: Maturase K (505 aa).

The protein belongs to the intron maturase 2 family. MatK subfamily.

It localises to the plastid. The protein resides in the chloroplast. Functionally, usually encoded in the trnK tRNA gene intron. Probably assists in splicing its own and other chloroplast group II introns. In Spinacia oleracea (Spinach), this protein is Maturase K.